We begin with the raw amino-acid sequence, 159 residues long: NADH-quinone oxidoreductase subunit B (159 aa).

[4Fe-4S] cluster is bound by residues Cys-36, Cys-37, Cys-102, and Cys-132.

It belongs to the complex I 20 kDa subunit family. As to quaternary structure, NDH-1 is composed of 14 different subunits. Subunits NuoB, C, D, E, F, and G constitute the peripheral sector of the complex. Requires [4Fe-4S] cluster as cofactor.

The protein localises to the cell inner membrane. It catalyses the reaction a quinone + NADH + 5 H(+)(in) = a quinol + NAD(+) + 4 H(+)(out). In terms of biological role, NDH-1 shuttles electrons from NADH, via FMN and iron-sulfur (Fe-S) centers, to quinones in the respiratory chain. Couples the redox reaction to proton translocation (for every two electrons transferred, four hydrogen ions are translocated across the cytoplasmic membrane), and thus conserves the redox energy in a proton gradient. The polypeptide is NADH-quinone oxidoreductase subunit B (Paracidovorax citrulli (strain AAC00-1) (Acidovorax citrulli)).